Here is a 683-residue protein sequence, read N- to C-terminus: ATP-dependent zinc metalloprotease FtsH (683 aa).

A disordered region spans residues 1-43; the sequence is MEDKNIKDDEILDDQNDNQEDVQNQDEEKEIKPKKPKKKVYIS. The Cytoplasmic portion of the chain corresponds to 1–70; that stretch reads MEDKNIKDDE…KNNNISFRVK (70 aa). Residues 10–28 show a composition bias toward acidic residues; the sequence is EILDDQNDNQEDVQNQDEE. Residues 71–91 traverse the membrane as a helical segment; it reads PPIFFFLILILMSTLFYFYGN. The Periplasmic portion of the chain corresponds to 92-174; the sequence is KTALFQEKRE…IVVLGTPVSS (83 aa). Residues 175–195 form a helical membrane-spanning segment; it reads IITRAIFSFAPLFMLLFFFYF. The Cytoplasmic segment spans residues 196–683; the sequence is INKKMMGSSG…LDDEQLEKYY (488 aa). Residue 270–277 coordinates ATP; sequence GEPGTGKT. Zn(2+) is bound at residue His-494. Glu-495 is a catalytic residue. 2 residues coordinate Zn(2+): His-498 and Asp-569.

The protein in the central section; belongs to the AAA ATPase family. This sequence in the C-terminal section; belongs to the peptidase M41 family. In terms of assembly, homohexamer. Zn(2+) is required as a cofactor.

It localises to the cell inner membrane. Its function is as follows. Acts as a processive, ATP-dependent zinc metallopeptidase for both cytoplasmic and membrane proteins. Plays a role in the quality control of integral membrane proteins. The sequence is that of ATP-dependent zinc metalloprotease FtsH from Streptobacillus moniliformis (strain ATCC 14647 / DSM 12112 / NCTC 10651 / 9901).